The sequence spans 269 residues: Ethylene-responsive transcription factor ERN1 (269 aa).

Polar residues predominate over residues 1-15 (MEIQFQQPNLQQHQK). Disordered stretches follow at residues 1–36 (MEIQ…NKFV) and 128–157 (DVPA…LSSG). The AP2/ERF DNA-binding region spans 34–91 (KFVGVRQRPSGRWVAEIKDTTQKIRMWLGTFETAEEAARAYDEAACLLRGSNTRTNFI). The segment covering 128–146 (DVPAPSASTTSTSSNTSNS) has biased composition (low complexity).

This sequence belongs to the AP2/ERF transcription factor family. ERF subfamily.

The protein resides in the nucleus. Functionally, transcription factor involved in the symbiotic nodule signaling pathway in response to rhizobial stimulation. Functions as a transcriptional regulator required for root infection by symbiotic rhizobia, infection thread (IT) formation, and nodule development. May coordinate these processes. Functions downstream of the CCAMK-CYCLOPS complex. Probably not involved in arbuscular mycorrhizal (AM) symbiosis. The protein is Ethylene-responsive transcription factor ERN1 of Lotus japonicus (Lotus corniculatus var. japonicus).